A 662-amino-acid chain; its full sequence is U6 snRNA-specific terminal uridylyltransferase (662 aa).

Mg(2+) is bound by residues D183 and D185. In terms of domain architecture, PAP-associated spans 384–437 (CKFFRELFKYYANFDFTNKAIYGKKAMQKKTLSSAHGGVEESPLMLMDPMDITH).

Belongs to the DNA polymerase type-B-like family. In terms of assembly, forms a complex composed of sart-3, terminal uridylyltransferase usip-1 and U6 snRNA; complex formation is mediated by usip-1 and sart-3 binding to U6 snRNA. Mg(2+) is required as a cofactor. Requires Mn(2+) as cofactor. In terms of tissue distribution, ubiquitously expressed.

The protein resides in the nucleus. It localises to the nucleoplasm. It carries out the reaction RNA(n) + UTP = RNA(n)-3'-uridine ribonucleotide + diphosphate. Acts as a specific terminal uridylyltransferase for U6 snRNA. Responsible for the addition of UTP at the 3' end of U6 snRNA which stabilizes U6 snRNA. Does not have activity towards modified uridine containing 3'-monophosphorylation or 2'-O-methylation. This chain is U6 snRNA-specific terminal uridylyltransferase, found in Caenorhabditis elegans.